Consider the following 303-residue polypeptide: Probable endonuclease 4 (303 aa).

Zn(2+) contacts are provided by His75, His115, Glu151, Asp185, His188, His221, Asp234, His236, and Glu266.

Belongs to the AP endonuclease 2 family. It depends on Zn(2+) as a cofactor.

The catalysed reaction is Endonucleolytic cleavage to 5'-phosphooligonucleotide end-products.. Endonuclease IV plays a role in DNA repair. It cleaves phosphodiester bonds at apurinic or apyrimidinic (AP) sites, generating a 3'-hydroxyl group and a 5'-terminal sugar phosphate. In Ureaplasma parvum serovar 3 (strain ATCC 700970), this protein is Probable endonuclease 4.